We begin with the raw amino-acid sequence, 389 residues long: Succinate--CoA ligase [ADP-forming] subunit beta (389 aa).

The ATP-grasp domain maps to Arg9 to Lys236. ATP-binding positions include Lys45, Gly52 to Gly54, Ala94, and Glu99. Residues Asn191 and Asp205 each coordinate Mg(2+). Substrate is bound by residues Asn256 and Gly318–Thr320.

This sequence belongs to the succinate/malate CoA ligase beta subunit family. As to quaternary structure, heterotetramer of two alpha and two beta subunits. The cofactor is Mg(2+).

The catalysed reaction is succinate + ATP + CoA = succinyl-CoA + ADP + phosphate. It catalyses the reaction GTP + succinate + CoA = succinyl-CoA + GDP + phosphate. It participates in carbohydrate metabolism; tricarboxylic acid cycle; succinate from succinyl-CoA (ligase route): step 1/1. Functionally, succinyl-CoA synthetase functions in the citric acid cycle (TCA), coupling the hydrolysis of succinyl-CoA to the synthesis of either ATP or GTP and thus represents the only step of substrate-level phosphorylation in the TCA. The beta subunit provides nucleotide specificity of the enzyme and binds the substrate succinate, while the binding sites for coenzyme A and phosphate are found in the alpha subunit. The sequence is that of Succinate--CoA ligase [ADP-forming] subunit beta from Arthrobacter sp. (strain FB24).